Here is a 2084-residue protein sequence, read N- to C-terminus: RNA-directed RNA polymerase L (2084 aa).

The segment at 20–221 (EPGLYDQIYD…IELQKSEEEL (202 aa)) is endonuclease. Residues H80, D112, and E126 each contribute to the Mn(2+) site. The active-site For endonuclease activity is K145. A RdRp catalytic domain is found at 969-1172 (SARSLGPGSI…FGIYSSEKST (204 aa)). D1127 is a Mg(2+) binding site. A cap-binding region spans residues 1695–1810 (AQSGTLGGFS…TDGCPVRIME (116 aa)).

It belongs to the Bunyavirales RNA polymerase family. In terms of assembly, homomultimer. Interacts with the glycoprotein N; this interaction allows efficient polymerase packaging into virus particles. Interacts with nucleoprotein N. Requires Mn(2+) as cofactor. Mg(2+) is required as a cofactor.

The protein resides in the host Golgi apparatus. The protein localises to the host endoplasmic reticulum. It is found in the host endoplasmic reticulum-Golgi intermediate compartment. It localises to the virion. It catalyses the reaction RNA(n) + a ribonucleoside 5'-triphosphate = RNA(n+1) + diphosphate. Its activity is regulated as follows. Inhibited by Baloxavir acid (BXA). Functionally, RNA-dependent RNA polymerase, which is responsible for the replication and transcription of the viral RNA genome using antigenomic RNA as an intermediate. During transcription, synthesizes subgenomic RNAs and assures their capping by a cap-snatching mechanism, which involves the endonuclease activity cleaving the host capped pre-mRNAs. These short capped RNAs are then used as primers for viral transcription. The 3'-end of subgenomic mRNAs molecules are not polyadenylated. During replication, the polymerase binds the 5' and 3' vRNA extremities at distinct sites. In turn, significant conformational changes occur in the polymerase and in vRNA to initiate active RNA synthesis. As a consequence of the use of the same enzyme for both transcription and replication, these mechanisms need to be well coordinated. The chain is RNA-directed RNA polymerase L from Dabie bandavirus (Severe fever with thrombocytopenia virus).